The primary structure comprises 158 residues: Cell number regulator 11 (158 aa).

The next 2 membrane-spanning stretches (helical) occupy residues 49 to 67 and 78 to 94; these read FGDL…VTFG and TCCM…TIGW.

Belongs to the cornifelin family.

The protein resides in the membrane. The protein is Cell number regulator 11 (CNR11) of Zea mays (Maize).